We begin with the raw amino-acid sequence, 279 residues long: NADPH-dependent 7-cyano-7-deazaguanine reductase (279 aa).

Substrate is bound at residue 86-88 (IES). 88-89 (SK) lines the NADPH pocket. Cys-187 acts as the Thioimide intermediate in catalysis. Asp-194 serves as the catalytic Proton donor. 226–227 (HE) lines the substrate pocket. An NADPH-binding site is contributed by 255-256 (RG).

It belongs to the GTP cyclohydrolase I family. QueF type 2 subfamily. As to quaternary structure, homodimer.

Its subcellular location is the cytoplasm. It carries out the reaction 7-aminomethyl-7-carbaguanine + 2 NADP(+) = 7-cyano-7-deazaguanine + 2 NADPH + 3 H(+). It functions in the pathway tRNA modification; tRNA-queuosine biosynthesis. Its function is as follows. Catalyzes the NADPH-dependent reduction of 7-cyano-7-deazaguanine (preQ0) to 7-aminomethyl-7-deazaguanine (preQ1). The protein is NADPH-dependent 7-cyano-7-deazaguanine reductase of Haemophilus influenzae (strain PittGG).